Here is a 116-residue protein sequence, read N- to C-terminus: NADPH-dependent 7-cyano-7-deazaguanine reductase (116 aa).

The active-site Thioimide intermediate is C31. The active-site Proton donor is D38. Substrate-binding positions include 53 to 55 (VEL) and 72 to 73 (YE).

It belongs to the GTP cyclohydrolase I family. QueF type 1 subfamily.

Its subcellular location is the cytoplasm. It catalyses the reaction 7-aminomethyl-7-carbaguanine + 2 NADP(+) = 7-cyano-7-deazaguanine + 2 NADPH + 3 H(+). Its pathway is tRNA modification; tRNA-queuosine biosynthesis. Functionally, catalyzes the NADPH-dependent reduction of 7-cyano-7-deazaguanine (preQ0) to 7-aminomethyl-7-deazaguanine (preQ1). This chain is NADPH-dependent 7-cyano-7-deazaguanine reductase, found in Chlorobium phaeovibrioides (strain DSM 265 / 1930) (Prosthecochloris vibrioformis (strain DSM 265)).